Consider the following 271-residue polypeptide: MSVHKMVKRITSSQIRARKGQQPIVSLTAYQAYTARIADPYCDILLVGDSVGMVVYGFETTLPVNLDMMILHGQAVVRGSQKALVVIDMPFGSYEESKEQAFLNASRILAQTGCGAVKLEGGVYMAETIDFLCKRGIPVMGHIGLTPQAVNRFGGFNTQGRKESDWQRIEDDAVVIENAGAFAIVLEGIVEPLAVKLTEKLSIPTIGIGASNQCDGQVLVMEDMLGYGAHVPKFVRRYGDLEQAMETAIKNYAEDVTSRAFPAEKEVYKLK.

Mg(2+) is bound by residues aspartate 49 and aspartate 88. 3-methyl-2-oxobutanoate is bound by residues 49 to 50, aspartate 88, and lysine 118; that span reads DS. Residue glutamate 120 coordinates Mg(2+). Glutamate 187 (proton acceptor) is an active-site residue.

The protein belongs to the PanB family. Homodecamer; pentamer of dimers. The cofactor is Mg(2+).

The protein localises to the cytoplasm. The enzyme catalyses 3-methyl-2-oxobutanoate + (6R)-5,10-methylene-5,6,7,8-tetrahydrofolate + H2O = 2-dehydropantoate + (6S)-5,6,7,8-tetrahydrofolate. Its pathway is cofactor biosynthesis; (R)-pantothenate biosynthesis; (R)-pantoate from 3-methyl-2-oxobutanoate: step 1/2. Its function is as follows. Catalyzes the reversible reaction in which hydroxymethyl group from 5,10-methylenetetrahydrofolate is transferred onto alpha-ketoisovalerate to form ketopantoate. The chain is 3-methyl-2-oxobutanoate hydroxymethyltransferase from Bartonella tribocorum (strain CIP 105476 / IBS 506).